A 473-amino-acid polypeptide reads, in one-letter code: NADH-quinone oxidoreductase subunit N (473 aa).

14 helical membrane-spanning segments follow: residues 3 to 23, 30 to 50, 62 to 82, 99 to 119, 120 to 140, 153 to 173, 195 to 215, 230 to 252, 262 to 282, 291 to 311, 326 to 346, 368 to 388, 408 to 428, and 444 to 464; these read LHYLPAIIISIAILVLLLVIA, LAFYITGTGLCIACVSQCSLL, FSSMSGVLSVLLLGILIFLWL, FYLLLLLASLGALGMIVSEHF, ASFFLTLELMSLSFVGLIAYS, YLILSAVASAFMLMGIAIVYL, MLFTAGLIFILIGLLFKLSLV, LPTTALLSTVSKLASFVVLWKLF, IVLTLIGVVAVASMLIGNLLA, ILAFSSISHFGYLLILLFLFN, ALLFYLSAYLITLTGAFSILM, AASLSIVMLSLAGIPLTLGFM, FLVIASVIGLFFYLRVIMVML, and VASLWFIILLIMGLGTFPALF.

It belongs to the complex I subunit 2 family. NDH-1 is composed of 13 different subunits. Subunits NuoA, H, J, K, L, M, N constitute the membrane sector of the complex.

It localises to the cell inner membrane. The catalysed reaction is a quinone + NADH + 5 H(+)(in) = a quinol + NAD(+) + 4 H(+)(out). NDH-1 shuttles electrons from NADH, via FMN and iron-sulfur (Fe-S) centers, to quinones in the respiratory chain. The immediate electron acceptor for the enzyme in this species is believed to be ubiquinone. Couples the redox reaction to proton translocation (for every two electrons transferred, four hydrogen ions are translocated across the cytoplasmic membrane), and thus conserves the redox energy in a proton gradient. In Shewanella woodyi (strain ATCC 51908 / MS32), this protein is NADH-quinone oxidoreductase subunit N.